Consider the following 119-residue polypeptide: Beta-2-microglobulin (119 aa).

The signal sequence occupies residues 1 to 20 (MARSVAVVFLMLLSVVCLDA). The Ig-like C1-type domain maps to 25 to 114 (PQVQVYTRHP…TTLKEPKVVT (90 aa)). Residues C45 and C100 are joined by a disulfide bond.

It belongs to the beta-2-microglobulin family. As to quaternary structure, heterodimer of an alpha chain and a beta chain. Beta-2-microglobulin is the beta-chain of major histocompatibility complex class I molecules.

The protein localises to the secreted. Component of the class I major histocompatibility complex (MHC). Involved in the presentation of peptide antigens to the immune system. The sequence is that of Beta-2-microglobulin (B2M) from Cricetulus griseus (Chinese hamster).